Reading from the N-terminus, the 44-residue chain is Photosystem I reaction center subunit IX (44 aa).

A helical transmembrane segment spans residues 7–27 (YLSVAPVLTTLWFGSLAGLLI).

The protein belongs to the PsaJ family.

Its subcellular location is the plastid. It localises to the chloroplast thylakoid membrane. May help in the organization of the PsaE and PsaF subunits. The sequence is that of Photosystem I reaction center subunit IX from Nymphaea alba (White water-lily).